A 344-amino-acid chain; its full sequence is Holliday junction branch migration complex subunit RuvB (344 aa).

A large ATPase domain (RuvB-L) region spans residues Met1–Tyr181. Residues Leu20, Arg21, Gly62, Lys65, Thr66, Thr67, Glu128 to Tyr130, Arg171, Tyr181, and Arg218 each bind ATP. Thr66 contributes to the Mg(2+) binding site. Positions Asp182–Glu252 are small ATPAse domain (RuvB-S). The tract at residues Asn255–Lys344 is head domain (RuvB-H). The DNA site is built by Arg310 and Arg315.

Belongs to the RuvB family. Homohexamer. Forms an RuvA(8)-RuvB(12)-Holliday junction (HJ) complex. HJ DNA is sandwiched between 2 RuvA tetramers; dsDNA enters through RuvA and exits via RuvB. An RuvB hexamer assembles on each DNA strand where it exits the tetramer. Each RuvB hexamer is contacted by two RuvA subunits (via domain III) on 2 adjacent RuvB subunits; this complex drives branch migration. In the full resolvosome a probable DNA-RuvA(4)-RuvB(12)-RuvC(2) complex forms which resolves the HJ.

The protein resides in the cytoplasm. It catalyses the reaction ATP + H2O = ADP + phosphate + H(+). Its function is as follows. The RuvA-RuvB-RuvC complex processes Holliday junction (HJ) DNA during genetic recombination and DNA repair, while the RuvA-RuvB complex plays an important role in the rescue of blocked DNA replication forks via replication fork reversal (RFR). RuvA specifically binds to HJ cruciform DNA, conferring on it an open structure. The RuvB hexamer acts as an ATP-dependent pump, pulling dsDNA into and through the RuvAB complex. RuvB forms 2 homohexamers on either side of HJ DNA bound by 1 or 2 RuvA tetramers; 4 subunits per hexamer contact DNA at a time. Coordinated motions by a converter formed by DNA-disengaged RuvB subunits stimulates ATP hydrolysis and nucleotide exchange. Immobilization of the converter enables RuvB to convert the ATP-contained energy into a lever motion, pulling 2 nucleotides of DNA out of the RuvA tetramer per ATP hydrolyzed, thus driving DNA branch migration. The RuvB motors rotate together with the DNA substrate, which together with the progressing nucleotide cycle form the mechanistic basis for DNA recombination by continuous HJ branch migration. Branch migration allows RuvC to scan DNA until it finds its consensus sequence, where it cleaves and resolves cruciform DNA. This is Holliday junction branch migration complex subunit RuvB from Clostridium botulinum (strain Alaska E43 / Type E3).